The primary structure comprises 381 residues: Cytochrome b (381 aa).

A run of 4 helical transmembrane segments spans residues 34–54 (FGSL…FLAM), 78–99 (WLIR…YLHI), 114–134 (WNIG…GYVL), and 179–199 (FFAF…LHFL). Residues His84 and His98 each coordinate heme b. Heme b-binding residues include His183 and His197. Position 202 (His202) interacts with a ubiquinone. The next 4 helical transmembrane spans lie at 227-247 (YKDI…VLFL), 289-309 (LGGV…PFLH), 321-341 (LTQL…WIGG), and 348-368 (FIFI…IITP).

The protein belongs to the cytochrome b family. In terms of assembly, the cytochrome bc1 complex contains 3 respiratory subunits (MT-CYB, CYC1 and UQCRFS1), 2 core proteins (UQCRC1 and UQCRC2) and probably 6 low-molecular weight proteins. Requires heme b as cofactor.

It is found in the mitochondrion inner membrane. Component of the ubiquinol-cytochrome c reductase complex (complex III or cytochrome b-c1 complex) that is part of the mitochondrial respiratory chain. The b-c1 complex mediates electron transfer from ubiquinol to cytochrome c. Contributes to the generation of a proton gradient across the mitochondrial membrane that is then used for ATP synthesis. This Heterodontus francisci (Horn shark) protein is Cytochrome b (mt-cyb).